The primary structure comprises 450 residues: Probable transporter MCH1 (450 aa).

Helical transmembrane passes span 32–52, 69–89, 96–116, 127–147, 157–177, 199–219, 255–275, 290–309, 320–340, 355–375, 378–398, and 423–443; these read AFLVALCACIPAGFISQISLY, VLFSAVNLGGYITPPLLGLLS, MLSWLSFVGFVPTYAYAAWVF, VLCFTLIGISTNALYFSALFT, LCSISLPATFYGMASVLGSQL, LAVAYTLISFCMWFATSIVTM, PAAYFMALVLLLSLGPMEMFL, VLPEFAIASTCSRFLSGLII, MSVQWAVLLLGVVGQWIVVLA, LSGACYGGLFTVSPILTLAVW, AVFGTAYGSFMITPAVGSILF, and VFWSSTSALAIALLFSVLMYL.

This sequence belongs to the major facilitator superfamily.

It localises to the vacuole membrane. In terms of biological role, probable transporter. The protein is Probable transporter MCH1 (MCH1) of Eremothecium gossypii (strain ATCC 10895 / CBS 109.51 / FGSC 9923 / NRRL Y-1056) (Yeast).